The chain runs to 244 residues: 7-cyano-7-deazaguanine synthase (244 aa).

17-27 provides a ligand contact to ATP; that stretch reads FSGGQDSTTCL. Residues C205, C220, C223, and C226 each contribute to the Zn(2+) site.

This sequence belongs to the QueC family. The cofactor is Zn(2+).

It carries out the reaction 7-carboxy-7-deazaguanine + NH4(+) + ATP = 7-cyano-7-deazaguanine + ADP + phosphate + H2O + H(+). The protein operates within purine metabolism; 7-cyano-7-deazaguanine biosynthesis. In terms of biological role, catalyzes the ATP-dependent conversion of 7-carboxy-7-deazaguanine (CDG) to 7-cyano-7-deazaguanine (preQ(0)). This is 7-cyano-7-deazaguanine synthase from Bordetella pertussis (strain Tohama I / ATCC BAA-589 / NCTC 13251).